The primary structure comprises 134 residues: MALKIRLARAGSKKRPYYHVVVADVRAPRDGRFIETVGSWNPVLPKDAERVKLDAERIQHWIAQGAQPTDRVLRFLDQAGIAKRPSRNNPTKGEPGKKAQERLALAKQAEEEAAAKAAEAAAAAAAPAEEAASE.

The disordered stretch occupies residues 79–134 (AGIAKRPSRNNPTKGEPGKKAQERLALAKQAEEEAAAKAAEAAAAAAAPAEEAASE). Residues 115–134 (AKAAEAAAAAAAPAEEAASE) are compositionally biased toward low complexity.

Belongs to the bacterial ribosomal protein bS16 family.

This Brucella canis (strain ATCC 23365 / NCTC 10854 / RM-666) protein is Small ribosomal subunit protein bS16.